We begin with the raw amino-acid sequence, 510 residues long: NAD(P)H-quinone oxidoreductase subunit 2 A, chloroplastic (510 aa).

12 helical membrane passes run 31-51 (FIFPECILIFGLILLLMIDLT), 59-79 (WFYFISSTSLVISITALLFRW), 99-119 (IFQFLILLCSTLCIPLSVEYI), 124-144 (MAITEFLLFVLTATLGGMFLC), 149-169 (LITIFVAPECFSLCSYLLSGY), 183-203 (YLLMGGASSSILVHGFSWLYG), 229-249 (ISIALISITVGLGFKLSPAPF), 295-315 (WHLLLEILAILSMILGNLLAI), 323-343 (MLAYSSIGQIGYVIIGIIVGD), 354-374 (YMLFYISMNLGTFACIVLFGL), 395-415 (ALSLALCLLSLGGLPPLAGFF), and 418-438 (LYLFWCGWQAGLYFLVSIGLL).

Belongs to the complex I subunit 2 family. NDH is composed of at least 16 different subunits, 5 of which are encoded in the nucleus.

It localises to the plastid. It is found in the chloroplast thylakoid membrane. It catalyses the reaction a plastoquinone + NADH + (n+1) H(+)(in) = a plastoquinol + NAD(+) + n H(+)(out). It carries out the reaction a plastoquinone + NADPH + (n+1) H(+)(in) = a plastoquinol + NADP(+) + n H(+)(out). NDH shuttles electrons from NAD(P)H:plastoquinone, via FMN and iron-sulfur (Fe-S) centers, to quinones in the photosynthetic chain and possibly in a chloroplast respiratory chain. The immediate electron acceptor for the enzyme in this species is believed to be plastoquinone. Couples the redox reaction to proton translocation, and thus conserves the redox energy in a proton gradient. The protein is NAD(P)H-quinone oxidoreductase subunit 2 A, chloroplastic of Oryza nivara (Indian wild rice).